We begin with the raw amino-acid sequence, 388 residues long: Na(+)/H(+) antiporter NhaA (388 aa).

Residues 1-11 lie on the Cytoplasmic side of the membrane; that stretch reads MKHLHRFFSSD. The chain crosses the membrane as a helical span at residues 12–31; that stretch reads ASGGIILIIAAILAMMMANS. Residues 32-58 lie on the Periplasmic side of the membrane; that stretch reads GATSGWYHDFLETPVQLRVGSLEINKN. A helical transmembrane segment spans residues 59 to 80; the sequence is MLLWINDALMAVFFLLVGLEVK. The Cytoplasmic portion of the chain corresponds to 81-96; that stretch reads RELMQGSLASLRQAAF. A helical transmembrane segment spans residues 97–116; it reads PVIAAIGGMIVPALLYLAFN. Over 117-122 the chain is Periplasmic; that stretch reads YADPIT. Residues 123 to 130 traverse the membrane as a helical segment; the sequence is REGWAIPA. Topologically, residues 131–154 are cytoplasmic; sequence ATDIAFALGVLALLGSRVPLALKI. Residues 155-176 traverse the membrane as a helical segment; sequence FLMALAIIDDLGAIIIIALFYT. Residues 177–180 lie on the Periplasmic side of the membrane; sequence NDLS. Residues 181–200 traverse the membrane as a helical segment; the sequence is MASLGVAAVAIAVLAVLNLC. Residues 201–204 lie on the Cytoplasmic side of the membrane; the sequence is GVRR. A helical membrane pass occupies residues 205–222; that stretch reads TGVYILVGVVLWTAVLKS. G223 is a topological domain (periplasmic). The helical transmembrane segment at 224 to 236 threads the bilayer; sequence VHATLAGVIVGFF. The Cytoplasmic segment spans residues 237–253; the sequence is IPLKEKHGRSPAKRLEH. Residues 254-272 traverse the membrane as a helical segment; the sequence is VLHPWVAYLILPLFAFANA. The Periplasmic portion of the chain corresponds to 273–286; it reads GVSLQGVTLDGLTS. The helical transmembrane segment at 287 to 310 threads the bilayer; the sequence is ILPLGIIAGLLIGKPLGISLFCWL. Topologically, residues 311 to 339 are cytoplasmic; sequence ALRLKLAHLPEGTTYQQIMAVGILCGIGF. Residues 340–350 traverse the membrane as a helical segment; the sequence is TMSIFIASLAF. Topologically, residues 351-357 are periplasmic; that stretch reads GSVDPEL. A helical membrane pass occupies residues 358–380; that stretch reads INWAKLGILVGSISSAVIGYSWL. Residues 381–388 are Cytoplasmic-facing; it reads RVRLRPSV.

Belongs to the NhaA Na(+)/H(+) (TC 2.A.33) antiporter family.

The protein resides in the cell inner membrane. It carries out the reaction Na(+)(in) + 2 H(+)(out) = Na(+)(out) + 2 H(+)(in). Functionally, na(+)/H(+) antiporter that extrudes sodium in exchange for external protons. This chain is Na(+)/H(+) antiporter NhaA, found in Shigella boydii serotype 4 (strain Sb227).